A 355-amino-acid chain; its full sequence is Uroporphyrinogen decarboxylase (355 aa).

Residues 27–31, Asp77, Tyr154, Thr209, and His327 contribute to the substrate site; that span reads RQAGR.

This sequence belongs to the uroporphyrinogen decarboxylase family. As to quaternary structure, homodimer.

It is found in the cytoplasm. The catalysed reaction is uroporphyrinogen III + 4 H(+) = coproporphyrinogen III + 4 CO2. The protein operates within porphyrin-containing compound metabolism; protoporphyrin-IX biosynthesis; coproporphyrinogen-III from 5-aminolevulinate: step 4/4. Catalyzes the decarboxylation of four acetate groups of uroporphyrinogen-III to yield coproporphyrinogen-III. This is Uroporphyrinogen decarboxylase from Yersinia pestis bv. Antiqua (strain Antiqua).